The sequence spans 363 residues: Dihydroorotate dehydrogenase (quinone) (363 aa).

Residues 67-71 (AGFDK) and Thr-91 each bind FMN. Lys-71 contributes to the substrate binding site. Position 116–120 (116–120 (NRMGF)) interacts with substrate. Residues Asn-156 and Asn-189 each contribute to the FMN site. A substrate-binding site is contributed by Asn-189. Ser-192 functions as the Nucleophile in the catalytic mechanism. Residue Asn-194 participates in substrate binding. 2 residues coordinate FMN: Lys-231 and Thr-259. 260–261 (NT) provides a ligand contact to substrate. Residues Gly-287, Gly-316, and 337 to 338 (YT) contribute to the FMN site.

It belongs to the dihydroorotate dehydrogenase family. Type 2 subfamily. Monomer. The cofactor is FMN.

The protein resides in the cell membrane. The catalysed reaction is (S)-dihydroorotate + a quinone = orotate + a quinol. Its pathway is pyrimidine metabolism; UMP biosynthesis via de novo pathway; orotate from (S)-dihydroorotate (quinone route): step 1/1. Its function is as follows. Catalyzes the conversion of dihydroorotate to orotate with quinone as electron acceptor. In Kocuria rhizophila (strain ATCC 9341 / DSM 348 / NBRC 103217 / DC2201), this protein is Dihydroorotate dehydrogenase (quinone).